Consider the following 487-residue polypeptide: Betaine aldehyde dehydrogenase (487 aa).

K(+)-binding residues include Ser26 and Asp93. NAD(+) is bound at residue 150–152 (GAW). The active-site Charge relay system is Lys162. Residues 176–179 (KPSE) and 229–232 (SVPT) contribute to the NAD(+) site. Leu244 serves as a coordination point for K(+). Glu250 serves as the catalytic Proton acceptor. NAD(+) is bound by residues Gly252, Cys284, and Glu384. Cys284 serves as the catalytic Nucleophile. Cysteine sulfenic acid (-SOH) is present on Cys284. Lys454 and Gly457 together coordinate K(+). Glu461 functions as the Charge relay system in the catalytic mechanism.

This sequence belongs to the aldehyde dehydrogenase family. In terms of assembly, dimer of dimers. The cofactor is K(+).

The enzyme catalyses betaine aldehyde + NAD(+) + H2O = glycine betaine + NADH + 2 H(+). Its pathway is amine and polyamine biosynthesis; betaine biosynthesis via choline pathway; betaine from betaine aldehyde: step 1/1. Involved in the biosynthesis of the osmoprotectant glycine betaine. Catalyzes the irreversible oxidation of betaine aldehyde to the corresponding acid. The polypeptide is Betaine aldehyde dehydrogenase (Rhizobium etli (strain ATCC 51251 / DSM 11541 / JCM 21823 / NBRC 15573 / CFN 42)).